A 325-amino-acid polypeptide reads, in one-letter code: NAD kinase (325 aa).

The active-site Proton acceptor is Asp91. NAD(+) contacts are provided by residues 91–92 (DG), His96, 165–166 (ND), His176, His193, Asp195, and 206–211 (TAYALS).

The protein belongs to the NAD kinase family. A divalent metal cation serves as cofactor.

The protein resides in the cytoplasm. It catalyses the reaction NAD(+) + ATP = ADP + NADP(+) + H(+). Involved in the regulation of the intracellular balance of NAD and NADP, and is a key enzyme in the biosynthesis of NADP. Catalyzes specifically the phosphorylation on 2'-hydroxyl of the adenosine moiety of NAD to yield NADP. In Psychrobacter arcticus (strain DSM 17307 / VKM B-2377 / 273-4), this protein is NAD kinase.